A 628-amino-acid polypeptide reads, in one-letter code: Basal cell adhesion molecule (628 aa).

An N-terminal signal peptide occupies residues 1–31 (MEPPDAPAQARGAPRLLLLAVLLAAHPDAQA). Ig-like V-type domains follow at residues 32–142 (EVRL…ARLN) and 147–257 (PEAT…PTFH). Topologically, residues 32 to 547 (EVRLSVPPLV…GTVSPQTSQA (516 aa)) are extracellular. 3 cysteine pairs are disulfide-bonded: Cys53-Cys125, Cys172-Cys237, and Cys291-Cys337. 3 consecutive Ig-like C2-type domains span residues 274–355 (PSTP…KTLE), 363–441 (PLEL…QNFT), and 448–541 (PELK…GTVS). The interaction with laminin alpha5 stretch occupies residues 309 to 312 (EQEE). N-linked (GlcNAc...) asparagine glycans are attached at residues Asn321, Asn377, Asn383, Asn419, and Asn439. Cys384 and Cys424 are joined by a disulfide. A disulfide bridge connects residues Cys473 and Cys522. The helical transmembrane segment at 548–568 (GVAVMAVAVSVGLLLLVVAVF) threads the bilayer. The Cytoplasmic segment spans residues 569 to 628 (YCVRRKGGPCCRQRREKGAPPPGEPGLSHSGSEQPEQTGLLMGGASGGARGGSGGFGDEC). Residues 579–628 (CRQRREKGAPPPGEPGLSHSGSEQPEQTGLLMGGASGGARGGSGGFGDEC) form a disordered region. At Ser596 the chain carries Phosphoserine; by GSK3. Ser598 bears the Phosphoserine; by CK2 mark. A Phosphoserine modification is found at Ser600. Over residues 609–628 (LMGGASGGARGGSGGFGDEC) the composition is skewed to gly residues. The residue at position 621 (Ser621) is a Phosphoserine; by PKA or PKB/AKT1.

In terms of assembly, homodimer. Interacts with ITGA4:ITGB1. Interacts with spectrins SPTA1 and SPTB1. In terms of processing, epinephrine-stimulated phosphorylation of Ser-621 by PKA enhances adhesion to laminin. Ser-621 can also be phosphorylated by AKT1. As to expression, wide tissue distribution (highest in the pancreas and very low in brain). Closely associated with the basal layer of cells in epithelia and the endothelium of blood vessel walls.

The protein localises to the cell membrane. In terms of biological role, transmembrane glycoprotein that functions as both a receptor and an adhesion molecule playing a crucial role in cell adhesion, motility, migration and invasion. Extracellular domain enables binding to extracellular matrix proteins, such as laminin, integrin and other ligands while its intracellular domain interacts with cytoskeletal proteins like hemoglobin, facilitating cell signal transduction. Serves as a receptor for laminin alpha-5/LAMA5 to promote cell adhesion. Mechanistically, JAK2 induces BCAM phosphorylation and activates its adhesion to laminin by stimulating a Rap1/AKT signaling pathway in the absence of EPOR. The polypeptide is Basal cell adhesion molecule (BCAM) (Homo sapiens (Human)).